Here is a 325-residue protein sequence, read N- to C-terminus: Glutarate 2-hydroxylase (325 aa).

Fe cation is bound by residues His-160, Asp-162, and His-292.

Belongs to the glutarate hydroxylase family. Homotetramer. It depends on Fe(2+) as a cofactor.

The enzyme catalyses glutarate + 2-oxoglutarate + O2 = (S)-2-hydroxyglutarate + succinate + CO2. It participates in amino-acid degradation. Functionally, acts as an alpha-ketoglutarate-dependent dioxygenase catalyzing hydroxylation of glutarate (GA) to L-2-hydroxyglutarate (L2HG). Functions in a L-lysine degradation pathway that proceeds via cadaverine, glutarate and L-2-hydroxyglutarate. The polypeptide is Glutarate 2-hydroxylase (Klebsiella pneumoniae (strain 342)).